Here is a 699-residue protein sequence, read N- to C-terminus: Homeobox-leucine zipper protein HDG8 (699 aa).

The segment at 1-31 (MDNNGGGSSGNEQYTSGDAKQNGKRTCHRHT) is disordered. Polar residues predominate over residues 10 to 19 (GNEQYTSGDA). The segment covering 22–31 (NGKRTCHRHT) has biased composition (basic residues). Residues 23 to 82 (GKRTCHRHTPQQIQRLEAYFKECPHPDERQRNQLCRELKLEPDQIKFWFQNKRTQSKTQE) constitute a DNA-binding region (homeobox). Residues 89 to 149 (LLRGENETLQ…LKDHRDRISN (61 aa)) are a coiled coil. The START domain occupies 204 to 438 (AETDMSLLSE…LERMCERMAL (235 aa)).

Belongs to the HD-ZIP homeobox family. Class IV subfamily. In terms of assembly, interacts with ANT. As to expression, expressed in the embryo at early stage and in the endosperm.

The protein resides in the nucleus. Probable transcription factor. This chain is Homeobox-leucine zipper protein HDG8, found in Arabidopsis thaliana (Mouse-ear cress).